The primary structure comprises 282 residues: Glutamate racemase (282 aa).

Substrate contacts are provided by residues 13–14 and 45–46; these read DS and YG. Cysteine 76 (proton donor/acceptor) is an active-site residue. Substrate is bound at residue 77–78; that stretch reads NT. Cysteine 186 acts as the Proton donor/acceptor in catalysis. Residue 187–188 participates in substrate binding; it reads TH.

The protein belongs to the aspartate/glutamate racemases family.

The enzyme catalyses L-glutamate = D-glutamate. It participates in cell wall biogenesis; peptidoglycan biosynthesis. Provides the (R)-glutamate required for cell wall biosynthesis. This chain is Glutamate racemase, found in Ralstonia pickettii (strain 12J).